Reading from the N-terminus, the 371-residue chain is Diguanylate cyclase A (371 aa).

Residues 233 to 366 (ETLSILMIDI…GRNRVTLSKN (134 aa)) form the GGDEF domain. D241, I242, and E284 together coordinate Mg(2+). E284 serves as the catalytic Proton acceptor.

As to quaternary structure, exists as a homodimer and as larger aggregates. Both dimers and aggregates possess DGC activity. Mg(2+) serves as cofactor. Mn(2+) is required as a cofactor.

The protein resides in the cytoplasm. It catalyses the reaction 2 GTP = 3',3'-c-di-GMP + 2 diphosphate. Allosterically regulated by a feedback inhibition loop. Functionally, catalyzes the conversion of GTP to cyclic-di-GMP (c-di-GMP). Shows activity under aerobic and anaerobic reaction conditions. The chain is Diguanylate cyclase A from Treponema denticola (strain ATCC 35405 / DSM 14222 / CIP 103919 / JCM 8153 / KCTC 15104).